Here is a 702-residue protein sequence, read N- to C-terminus: Epsin-1 (702 aa).

The ENTH domain occupies Asn-10–Arg-142. Composition is skewed to basic and acidic residues over residues His-136–Phe-160 and Ser-183–His-192. Residues His-136–Gln-285 are disordered. Residues Arg-193–Arg-214 are compositionally biased toward basic residues. Phosphoserine occurs at positions 212, 216, 218, and 223. UIM domains follow at residues Glu-226–Asp-245 and Asp-254–Arg-273. Positions Glu-230–Arg-248 are enriched in basic and acidic residues. Ser-255 is subject to Phosphoserine. Residues Ser-266 to Gln-283 show a composition bias toward basic and acidic residues. Thr-406 bears the Phosphothreonine mark. Disordered regions lie at residues Asn-504–Asp-589 and Pro-683–Leu-702. The span at Thr-514–Leu-534 shows a compositional bias: polar residues. Low complexity predominate over residues Gln-535–Ser-549. The segment covering Lys-557 to Pro-577 has biased composition (polar residues). The span at Pro-683–Gln-695 shows a compositional bias: low complexity.

This sequence belongs to the epsin family.

The protein resides in the cytoplasm. It is found in the membrane. Functionally, binds to membranes enriched in phosphatidylinositol 3,5-bisphosphate (PtdIns(3,5)P2) and phosphatidylinositol 4,5-bisphosphate (PtdIns(4,5)P2). Required for endocytosis and localization of actin. In Schizosaccharomyces pombe (strain 972 / ATCC 24843) (Fission yeast), this protein is Epsin-1 (ent1).